The following is a 224-amino-acid chain: Protein PLANT CADMIUM RESISTANCE 6 (224 aa).

A helical membrane pass occupies residues 131–151; the sequence is GMLYGLICCLFAIPCVYTCTF.

It belongs to the cornifelin family.

It localises to the membrane. In terms of biological role, may be involved in heavy metals transport. In Arabidopsis thaliana (Mouse-ear cress), this protein is Protein PLANT CADMIUM RESISTANCE 6 (PCR6).